The following is a 330-amino-acid chain: Lipoyl synthase (330 aa).

Residues cysteine 77, cysteine 82, cysteine 88, cysteine 103, cysteine 107, cysteine 110, and serine 317 each coordinate [4Fe-4S] cluster. A Radical SAM core domain is found at 89–306 (FNHGTATFMI…RSEAERMGFE (218 aa)).

It belongs to the radical SAM superfamily. Lipoyl synthase family. [4Fe-4S] cluster is required as a cofactor.

The protein resides in the cytoplasm. The enzyme catalyses [[Fe-S] cluster scaffold protein carrying a second [4Fe-4S](2+) cluster] + N(6)-octanoyl-L-lysyl-[protein] + 2 oxidized [2Fe-2S]-[ferredoxin] + 2 S-adenosyl-L-methionine + 4 H(+) = [[Fe-S] cluster scaffold protein] + N(6)-[(R)-dihydrolipoyl]-L-lysyl-[protein] + 4 Fe(3+) + 2 hydrogen sulfide + 2 5'-deoxyadenosine + 2 L-methionine + 2 reduced [2Fe-2S]-[ferredoxin]. The protein operates within protein modification; protein lipoylation via endogenous pathway; protein N(6)-(lipoyl)lysine from octanoyl-[acyl-carrier-protein]: step 2/2. Catalyzes the radical-mediated insertion of two sulfur atoms into the C-6 and C-8 positions of the octanoyl moiety bound to the lipoyl domains of lipoate-dependent enzymes, thereby converting the octanoylated domains into lipoylated derivatives. This Actinobacillus pleuropneumoniae serotype 5b (strain L20) protein is Lipoyl synthase.